The sequence spans 451 residues: Chromosomal replication initiator protein DnaA (451 aa).

The segment at 1–82 (MENSLWKQCL…RLELQIGSSA (82 aa)) is domain I, interacts with DnaA modulators. The segment at 82–114 (AVVAPPRRRQVSVTTPSPSAAADQTPATRSAAS) is domain II. A disordered region spans residues 85 to 112 (APPRRRQVSVTTPSPSAAADQTPATRSA). The tract at residues 115 to 331 (NLNSNFTFDT…GALRRVVANA (217 aa)) is domain III, AAA+ region. The ATP site is built by glycine 159, glycine 161, lysine 162, and threonine 163. The tract at residues 332-451 (QFTGQEITVE…YSNLLRTLST (120 aa)) is domain IV, binds dsDNA.

The protein belongs to the DnaA family. As to quaternary structure, oligomerizes as a right-handed, spiral filament on DNA at oriC.

The protein localises to the cytoplasm. Plays an essential role in the initiation and regulation of chromosomal replication. ATP-DnaA binds to the origin of replication (oriC) to initiate formation of the DNA replication initiation complex once per cell cycle. Binds the DnaA box (a 9 base pair repeat at the origin) and separates the double-stranded (ds)DNA. Forms a right-handed helical filament on oriC DNA; dsDNA binds to the exterior of the filament while single-stranded (ss)DNA is stabiized in the filament's interior. The ATP-DnaA-oriC complex binds and stabilizes one strand of the AT-rich DNA unwinding element (DUE), permitting loading of DNA polymerase. After initiation quickly degrades to an ADP-DnaA complex that is not apt for DNA replication. Binds acidic phospholipids. The polypeptide is Chromosomal replication initiator protein DnaA (Alkalilimnicola ehrlichii (strain ATCC BAA-1101 / DSM 17681 / MLHE-1)).